Reading from the N-terminus, the 308-residue chain is Solute carrier family 25 member 47 (308 aa).

Solcar repeat units follow at residues 1 to 80 (MDFV…CLAH), 93 to 206 (PTKA…LCEW), and 215 to 302 (PDVP…VLRL). Transmembrane regions (helical) follow at residues 3-23 (FVAG…LDTV), 49-69 (VWGF…VSSV), 98-116 (ITLS…TSPT), 190-210 (GHSF…LSPA), 217-237 (VPGV…VATP), and 273-293 (VLFK…MVVF).

The protein belongs to the mitochondrial carrier (TC 2.A.29) family. As to expression, specifically expressed in liver.

Its subcellular location is the mitochondrion inner membrane. It is found in the mitochondrion outer membrane. The catalysed reaction is NAD(+)(in) = NAD(+)(out). The enzyme catalyses acetyl-CoA(in) = acetyl-CoA(out). In terms of biological role, mitochondrial NAD(+) transporter that acts as a 'metabolic gate' in hepatic lipogenesis. Provides NAD(+) substrate to mitochondrial SIRT3 deacetylase and enables its NAD(+)-dependent activities in mitochondrial energy metabolism. This triggers downstream activation of PRKAA1/AMPK-alpha signaling cascade that negatively regulates sterol regulatory element-binding protein (SREBP) transcriptional activities and ATP-consuming lipogenesis to restore cellular energy balance. May transport other mitochondrial metabolites having an aromatic nucleotide and phosphate groups, such as acetyl-CoA. Does not transport amino acids. The transport mechanism remains to be elucidated. The sequence is that of Solute carrier family 25 member 47 from Homo sapiens (Human).